Consider the following 239-residue polypeptide: MPPDERAPLPLPAPAPLTPPEGFAERLAAIGVTLDAAVIAKLGDYLARLLAMNELMNLTSITDPVEVWEKHVLDSLTLLPLLEELSAGARLADIGSGGGLPGLPLAIARPDLKVTLVEATQKKASFLVAVAAGLGLTNVSVRAERAEQLGKGDLCGAFDAVTARAVGRLVMLIPLTVPFVRPSGLVLLVKGQRAEEELAEASWVLGRQRAAFVKTVATPTGKIVMLRKSGEEPKRHPGR.

Residues G95, L100, 118-120 (EAT), 146-147 (AE), and R164 each bind S-adenosyl-L-methionine.

This sequence belongs to the methyltransferase superfamily. RNA methyltransferase RsmG family.

It localises to the cytoplasm. It catalyses the reaction guanosine(527) in 16S rRNA + S-adenosyl-L-methionine = N(7)-methylguanosine(527) in 16S rRNA + S-adenosyl-L-homocysteine. Specifically methylates the N7 position of guanine in position 527 of 16S rRNA. The sequence is that of Ribosomal RNA small subunit methyltransferase G from Sorangium cellulosum (strain So ce56) (Polyangium cellulosum (strain So ce56)).